Here is a 294-residue protein sequence, read N- to C-terminus: Phosphoribosylaminoimidazole-succinocarboxamide synthase (294 aa).

It belongs to the SAICAR synthetase family.

It carries out the reaction 5-amino-1-(5-phospho-D-ribosyl)imidazole-4-carboxylate + L-aspartate + ATP = (2S)-2-[5-amino-1-(5-phospho-beta-D-ribosyl)imidazole-4-carboxamido]succinate + ADP + phosphate + 2 H(+). The protein operates within purine metabolism; IMP biosynthesis via de novo pathway; 5-amino-1-(5-phospho-D-ribosyl)imidazole-4-carboxamide from 5-amino-1-(5-phospho-D-ribosyl)imidazole-4-carboxylate: step 1/2. The sequence is that of Phosphoribosylaminoimidazole-succinocarboxamide synthase from Rhodococcus jostii (strain RHA1).